A 300-amino-acid polypeptide reads, in one-letter code: Ribosomal RNA small subunit methyltransferase H (300 aa).

Residues 46–48 (GGH), aspartate 65, phenylalanine 92, aspartate 107, and glutamine 114 contribute to the S-adenosyl-L-methionine site.

The protein belongs to the methyltransferase superfamily. RsmH family.

It localises to the cytoplasm. The catalysed reaction is cytidine(1402) in 16S rRNA + S-adenosyl-L-methionine = N(4)-methylcytidine(1402) in 16S rRNA + S-adenosyl-L-homocysteine + H(+). In terms of biological role, specifically methylates the N4 position of cytidine in position 1402 (C1402) of 16S rRNA. This is Ribosomal RNA small subunit methyltransferase H from Prochlorococcus marinus (strain MIT 9215).